The primary structure comprises 386 residues: Mannitol-1-phosphate 5-dehydrogenase (386 aa).

Residue 4–15 coordinates NAD(+); that stretch reads AIHFGGGNIGRG. Lysine 211 is an active-site residue.

It belongs to the mannitol dehydrogenase family. In terms of assembly, monomer.

It carries out the reaction D-mannitol 1-phosphate + NAD(+) = beta-D-fructose 6-phosphate + NADH + H(+). Its function is as follows. Catalyzes the NAD(H)-dependent interconversion of D-fructose 6-phosphate and D-mannitol 1-phosphate in the mannitol metabolic pathway. The chain is Mannitol-1-phosphate 5-dehydrogenase (mpdA) from Emericella nidulans (strain FGSC A4 / ATCC 38163 / CBS 112.46 / NRRL 194 / M139) (Aspergillus nidulans).